The primary structure comprises 596 residues: Chaperone protein DnaK (596 aa).

A Phosphothreonine; by autocatalysis modification is found at Thr174. The disordered stretch occupies residues 576-596; the sequence is ANATKDQSSKDQEEVATVVEE.

It belongs to the heat shock protein 70 family.

Functionally, acts as a chaperone. The protein is Chaperone protein DnaK of Mycoplasmopsis synoviae (strain 53) (Mycoplasma synoviae).